The primary structure comprises 353 residues: Photosystem II protein D1 (353 aa).

N-acetylthreonine is present on Thr2. Thr2 carries the post-translational modification Phosphothreonine. The next 3 membrane-spanning stretches (helical) occupy residues 29–46 (YIGW…TATS), 118–133 (HFLL…EWEL), and 142–156 (WIAV…AAAA). His118 contributes to the chlorophyll a binding site. Tyr126 is a pheophytin a binding site. Residues Asp170 and Glu189 each coordinate [CaMn4O5] cluster. Residues 197–218 (FHMLGVAGVFGGSLFSAMHGSL) traverse the membrane as a helical segment. A chlorophyll a-binding site is contributed by His198. A quinone-binding positions include His215 and 264–265 (SF). His215 provides a ligand contact to Fe cation. A Fe cation-binding site is contributed by His272. Residues 274-288 (FLAAWPVVGIWFTAL) traverse the membrane as a helical segment. Positions 332, 333, 342, and 344 each coordinate [CaMn4O5] cluster. A propeptide spanning residues 345–353 (AVEAPSTNG) is cleaved from the precursor.

Belongs to the reaction center PufL/M/PsbA/D family. As to quaternary structure, PSII is composed of 1 copy each of membrane proteins PsbA, PsbB, PsbC, PsbD, PsbE, PsbF, PsbH, PsbI, PsbJ, PsbK, PsbL, PsbM, PsbT, PsbX, PsbY, PsbZ, Psb30/Ycf12, at least 3 peripheral proteins of the oxygen-evolving complex and a large number of cofactors. It forms dimeric complexes. The D1/D2 heterodimer binds P680, chlorophylls that are the primary electron donor of PSII, and subsequent electron acceptors. It shares a non-heme iron and each subunit binds pheophytin, quinone, additional chlorophylls, carotenoids and lipids. D1 provides most of the ligands for the Mn4-Ca-O5 cluster of the oxygen-evolving complex (OEC). There is also a Cl(-1) ion associated with D1 and D2, which is required for oxygen evolution. The PSII complex binds additional chlorophylls, carotenoids and specific lipids. is required as a cofactor. In terms of processing, tyr-161 forms a radical intermediate that is referred to as redox-active TyrZ, YZ or Y-Z. C-terminally processed by CTPA; processing is essential to allow assembly of the oxygen-evolving complex and thus photosynthetic growth.

The protein resides in the plastid. It localises to the chloroplast thylakoid membrane. It carries out the reaction 2 a plastoquinone + 4 hnu + 2 H2O = 2 a plastoquinol + O2. Its function is as follows. Photosystem II (PSII) is a light-driven water:plastoquinone oxidoreductase that uses light energy to abstract electrons from H(2)O, generating O(2) and a proton gradient subsequently used for ATP formation. It consists of a core antenna complex that captures photons, and an electron transfer chain that converts photonic excitation into a charge separation. The D1/D2 (PsbA/PsbD) reaction center heterodimer binds P680, the primary electron donor of PSII as well as several subsequent electron acceptors. The sequence is that of Photosystem II protein D1 from Nandina domestica (Heavenly bamboo).